Reading from the N-terminus, the 442-residue chain is Enolase 1 (442 aa).

The segment at 73 to 140 (KLIAKEIVGY…YNYLGGFNAH (68 aa)) is binds human collagen. Glutamine 163 contributes to the (2R)-2-phosphoglycerate binding site. Catalysis depends on glutamate 205, which acts as the Proton donor. Mg(2+) contacts are provided by aspartate 242, glutamate 290, and aspartate 317. Lysine 342, arginine 371, serine 372, and lysine 393 together coordinate (2R)-2-phosphoglycerate. The active-site Proton acceptor is the lysine 342.

It belongs to the enolase family. Mg(2+) is required as a cofactor.

It is found in the cytoplasm. It localises to the secreted. Its subcellular location is the cell surface. It carries out the reaction (2R)-2-phosphoglycerate = phosphoenolpyruvate + H2O. It functions in the pathway carbohydrate degradation; glycolysis; pyruvate from D-glyceraldehyde 3-phosphate: step 4/5. In terms of biological role, catalyzes the reversible conversion of 2-phosphoglycerate (2-PG) into phosphoenolpyruvate (PEP). It is essential for the degradation of carbohydrates via glycolysis. Functionally, 'Moonlights' as a collagen receptor. Binds host (human) collagen, which may contribute to pathogenicity. The protein is Enolase 1 of Lactiplantibacillus plantarum (strain ATCC BAA-793 / NCIMB 8826 / WCFS1) (Lactobacillus plantarum).